Here is a 458-residue protein sequence, read N- to C-terminus: Phosphoglucosamine mutase (458 aa).

The active-site Phosphoserine intermediate is Ser108. Residues Ser108, Asp247, Asp249, and Asp251 each contribute to the Mg(2+) site. The residue at position 108 (Ser108) is a Phosphoserine.

It belongs to the phosphohexose mutase family. The cofactor is Mg(2+). In terms of processing, activated by phosphorylation.

The enzyme catalyses alpha-D-glucosamine 1-phosphate = D-glucosamine 6-phosphate. Its function is as follows. Catalyzes the conversion of glucosamine-6-phosphate to glucosamine-1-phosphate. This chain is Phosphoglucosamine mutase, found in Thiobacillus denitrificans (strain ATCC 25259 / T1).